A 127-amino-acid polypeptide reads, in one-letter code: Unclassified hydrophobin 5 (127 aa).

An N-terminal signal peptide occupies residues 1–24 (MFNKQTNAIVLLFTFALFATLAVA). Intrachain disulfides connect Cys-39–Cys-107, Cys-46–Cys-101, Cys-47–Cys-92, and Cys-108–Cys-121.

This sequence belongs to the fungal hydrophobin family. In terms of assembly, self-assembles to form functional amyloid fibrils called rodlets. Self-assembly into fibrillar rodlets occurs spontaneously at hydrophobic:hydrophilic interfaces and the rodlets further associate laterally to form amphipathic monolayers.

The protein localises to the secreted. Its subcellular location is the cell wall. Functionally, aerial growth, conidiation, and dispersal of filamentous fungi in the environment rely upon a capability of their secreting small amphipathic proteins called hydrophobins (HPBs) with low sequence identity. Class I can self-assemble into an outermost layer of rodlet bundles on aerial cell surfaces, conferring cellular hydrophobicity that supports fungal growth, development and dispersal; whereas Class II form highly ordered films at water-air interfaces through intermolecular interactions but contribute nothing to the rodlet structure. The protein is Unclassified hydrophobin 5 of Pleurotus ostreatus (strain PC15) (Oyster mushroom).